The following is a 518-amino-acid chain: Chaperonin GroEL (518 aa).

ATP-binding positions include T30–P33, K51, D87–T91, and G415.

It belongs to the chaperonin (HSP60) family. As to quaternary structure, forms a cylinder of 14 subunits composed of two heptameric rings stacked back-to-back. Interacts with the co-chaperonin GroES.

The protein localises to the cytoplasm. The catalysed reaction is ATP + H2O + a folded polypeptide = ADP + phosphate + an unfolded polypeptide.. Together with its co-chaperonin GroES, plays an essential role in assisting protein folding. The GroEL-GroES system forms a nano-cage that allows encapsulation of the non-native substrate proteins and provides a physical environment optimized to promote and accelerate protein folding. This chain is Chaperonin GroEL, found in Desulfotalea psychrophila (strain LSv54 / DSM 12343).